A 344-amino-acid chain; its full sequence is Phosphate acyltransferase (344 aa).

The protein belongs to the PlsX family. In terms of assembly, homodimer. Probably interacts with PlsY.

Its subcellular location is the cytoplasm. It catalyses the reaction a fatty acyl-[ACP] + phosphate = an acyl phosphate + holo-[ACP]. It functions in the pathway lipid metabolism; phospholipid metabolism. Its function is as follows. Catalyzes the reversible formation of acyl-phosphate (acyl-PO(4)) from acyl-[acyl-carrier-protein] (acyl-ACP). This enzyme utilizes acyl-ACP as fatty acyl donor, but not acyl-CoA. This chain is Phosphate acyltransferase, found in Cyanothece sp. (strain PCC 7425 / ATCC 29141).